The chain runs to 250 residues: Ribosomal RNA small subunit methyltransferase J (250 aa).

Residues 96–97 (RD) and Asp168 contribute to the S-adenosyl-L-methionine site.

The protein belongs to the methyltransferase superfamily. RsmJ family.

The protein localises to the cytoplasm. It catalyses the reaction guanosine(1516) in 16S rRNA + S-adenosyl-L-methionine = N(2)-methylguanosine(1516) in 16S rRNA + S-adenosyl-L-homocysteine + H(+). In terms of biological role, specifically methylates the guanosine in position 1516 of 16S rRNA. The chain is Ribosomal RNA small subunit methyltransferase J from Neisseria meningitidis serogroup B (strain ATCC BAA-335 / MC58).